Here is a 925-residue protein sequence, read N- to C-terminus: Probable glycoprotein hormone G-protein coupled receptor (925 aa).

The N-terminal stretch at 1–27 (MEDRGICPRVLQVLFLVVLILISPVYA) is a signal peptide. Residues 28–529 (AKNDACTKCS…EDIMGYVWLT (502 aa)) are Extracellular-facing. N61 carries N-linked (GlcNAc...) asparagine glycosylation. LRR repeat units follow at residues 85–106 (KLKY…RVKN), 110–131 (SLIT…AFDD), 134–155 (QLTQ…NKTS), 156–180 (SVTK…GNLP), 181–202 (SLEN…IFRQ), 203–224 (NTRL…NEDA), 230–250 (SLKT…RGLK), and 251–273 (NLHF…DSIR). N-linked (GlcNAc...) asparagine glycosylation is present at N152. N212 is a glycosylation site (N-linked (GlcNAc...) asparagine). The tract at residues 299–493 (TMQKPSTEEN…PTLIPHSNHT (195 aa)) is disordered. Over residues 301–318 (QKPSTEENNGQTTASSPT) the composition is skewed to polar residues. One copy of the 1; truncated repeat lies at 333–349 (STQPHTTSGFGGGGFPG). The segment at 333–461 (STQPHTTSGF…PGGGGFPGGG (129 aa)) is 5 X approximate tandem repeats. Gly residues predominate over residues 341–362 (GFGGGGFPGGGGGFPGGGGFPA). A run of 3 repeats spans residues 350–384 (GGGG…GFPG), 385–419 (GGGG…GFPG), and 420–453 (GGGG…GFPG). Residues 365–375 (SKTSTQPHTTS) show a composition bias toward polar residues. The span at 376–397 (GFGGGGFPGGGGGFPGGGGFPA) shows a compositional bias: gly residues. Residues 400 to 410 (SKTSTQPHTTS) are compositionally biased toward polar residues. The segment covering 411 to 432 (GFGGGGFPGGGGGFPGGGGFPG) has biased composition (gly residues). Polar residues predominate over residues 434-445 (SNTSTQPHTTSN). N435 carries N-linked (GlcNAc...) asparagine glycosylation. Residues 446 to 462 (SGGGGFPGGGGFPGGGT) are compositionally biased toward gly residues. The stretch at 454-461 (GGGFPGGG) is one 5; truncated repeat. Over residues 476–493 (VHQSTADPPTLIPHSNHT) the composition is skewed to polar residues. The N-linked (GlcNAc...) asparagine glycan is linked to N495. Residues 530 to 551 (VVSFMVGAVALVANLVVALVLL) traverse the membrane as a helical segment. Topologically, residues 552–561 (TSQRRLNVTR) are cytoplasmic. The helical transmembrane segment at 562 to 584 (FLMCNLAFADFILGLYIFILTSV) threads the bilayer. The Extracellular portion of the chain corresponds to 585-606 (SAVTRGDYHNYVQQWQNGAGCK). The helical transmembrane segment at 607-628 (ILGFLAVFSSELSLFTLVMMTI) threads the bilayer. The Cytoplasmic segment spans residues 629–651 (ERFYAIVHAMHMNARLSFRKTVR). A helical transmembrane segment spans residues 652–673 (FMIGGWIFALVMAVVPLTGVSG). Residues 674–691 (YSKVAICLPFDVSDATST) lie on the Extracellular side of the membrane. Residues 692–712 (AYVAFLLLVNGASFISVMYLY) traverse the membrane as a helical segment. Over 713–739 (SRMLYVVVSGGDMEGAPKRNDSKVAKR) the chain is Cytoplasmic. The chain crosses the membrane as a helical span at residues 740–763 (MAILVFTDMLCWAPIAFFGLLAAF). The Extracellular portion of the chain corresponds to 764-774 (GQTLLTVTQSK). The chain crosses the membrane as a helical span at residues 775–795 (ILLVFFFPINSICNPFLYAFF). At 796–925 (TKAFKRELFT…QKQKILQSPS (130 aa)) the chain is on the cytoplasmic side. The disordered stretch occupies residues 904 to 925 (VTKSSSPPHLKLQKQKILQSPS).

Belongs to the G-protein coupled receptor 1 family. FSH/LSH/TSH subfamily.

It localises to the cell membrane. Probable receptor for a glycoprotein hormone. This is Probable glycoprotein hormone G-protein coupled receptor from Anthopleura elegantissima (Green aggregating anemone).